The chain runs to 394 residues: Protein NDRG1 (394 aa).

At serine 2 the chain carries N-acetylserine. Residues serine 2, serine 319, and serine 326 each carry the phosphoserine modification. A disordered region spans residues 325–394 (RSRTASGSSV…AGPKSMEVSC (70 aa)). A compositionally biased stretch (polar residues) spans 327–339 (RTASGSSVTSLEG). Threonine 328 is modified (phosphothreonine). Serine 330 carries the post-translational modification Phosphoserine; by SGK1. 2 positions are modified to phosphoserine: serine 332 and serine 333. The residue at position 335 (threonine 335) is a Phosphothreonine. Phosphoserine is present on serine 336. Tandem repeats lie at residues 339–348 (GTRSRSHTSE), 349–358 (GPRSRSHTSE), and 359–368 (GSRSRSHTSE). A 3 X 10 AA tandem repeats of G-[PST]-R-S-R-S-H-T-S-E region spans residues 339–368 (GTRSRSHTSEGPRSRSHTSEGSRSRSHTSE). At threonine 340 the chain carries Phosphothreonine. Residue serine 342 is modified to Phosphoserine. Basic and acidic residues predominate over residues 345–371 (HTSEGPRSRSHTSEGSRSRSHTSEDAR). Threonine 346 is subject to Phosphothreonine; by SGK1. Phosphoserine is present on serine 352. Threonine 356 carries the post-translational modification Phosphothreonine; by SGK1. Serine 362 and serine 364 each carry phosphoserine. Threonine 366 carries the post-translational modification Phosphothreonine; by SGK1. The span at 374–386 (ITPNSGATGNNAG) shows a compositional bias: polar residues. Threonine 375 is subject to Phosphothreonine.

The protein belongs to the NDRG family. As to quaternary structure, interacts with RAB4A (membrane-bound form); the interaction involves NDRG1 in vesicular recycling of CDH1. Interacts with APOA1, APOA2, PRA1 and RTN1. Post-translationally, under stress conditions, phosphorylated in the C-terminal on many serine and threonine residues. Phosphorylated in vitro by PKA. Phosphorylation enhanced by increased intracellular cAMP levels. Homocysteine induces dephosphorylation. Phosphorylation by SGK1 is cell cycle dependent. In terms of tissue distribution, widely expressed, with highest levels in kidney followed by brain, pancreas, small intestine, colon and spleen (at protein level). Also detected in heart and preputial gland, and in much smaller quantities in other tissues. Not detected in duodenum and prostate. Highly expressed in Schwann cells.

It is found in the cytoplasm. The protein localises to the cytosol. It localises to the cytoskeleton. The protein resides in the microtubule organizing center. Its subcellular location is the centrosome. It is found in the nucleus. The protein localises to the cell membrane. Its function is as follows. Stress-responsive protein involved in hormone responses, cell growth, and differentiation. Acts as a tumor suppressor in many cell types. Necessary but not sufficient for p53/TP53-mediated caspase activation and apoptosis. Required for vesicular recycling of CDH1 and TF. May also function in lipid trafficking. Protects cells from spindle disruption damage. Functions in p53/TP53-dependent mitotic spindle checkpoint. Regulates microtubule dynamics and maintains euploidy. Has a role in cell trafficking notably of the Schwann cell and is necessary for the maintenance and development of the peripheral nerve myelin sheath. This Mus musculus (Mouse) protein is Protein NDRG1 (Ndrg1).